The chain runs to 137 residues: Putative pre-16S rRNA nuclease (137 aa).

The protein belongs to the YqgF nuclease family.

Its subcellular location is the cytoplasm. Its function is as follows. Could be a nuclease involved in processing of the 5'-end of pre-16S rRNA. This Desulforamulus reducens (strain ATCC BAA-1160 / DSM 100696 / MI-1) (Desulfotomaculum reducens) protein is Putative pre-16S rRNA nuclease.